The sequence spans 227 residues: Enolase-phosphatase E1 (227 aa).

Residues aspartate 11 and glutamate 13 each contribute to the Mg(2+) site. Residues 118–119 (SS) and lysine 161 each bind substrate. Aspartate 186 contributes to the Mg(2+) binding site.

It belongs to the HAD-like hydrolase superfamily. MasA/MtnC family. Monomer. The cofactor is Mg(2+).

It is found in the cytoplasm. It localises to the nucleus. It carries out the reaction 5-methylsulfanyl-2,3-dioxopentyl phosphate + H2O = 1,2-dihydroxy-5-(methylsulfanyl)pent-1-en-3-one + phosphate. Its pathway is amino-acid biosynthesis; L-methionine biosynthesis via salvage pathway; L-methionine from S-methyl-5-thio-alpha-D-ribose 1-phosphate: step 3/6. The protein operates within amino-acid biosynthesis; L-methionine biosynthesis via salvage pathway; L-methionine from S-methyl-5-thio-alpha-D-ribose 1-phosphate: step 4/6. Its function is as follows. Bifunctional enzyme that catalyzes the enolization of 2,3-diketo-5-methylthiopentyl-1-phosphate (DK-MTP-1-P) into the intermediate 2-hydroxy-3-keto-5-methylthiopentenyl-1-phosphate (HK-MTPenyl-1-P), which is then dephosphorylated to form the acireductone 1,2-dihydroxy-3-keto-5-methylthiopentene (DHK-MTPene). This chain is Enolase-phosphatase E1, found in Saccharomyces cerevisiae (strain YJM789) (Baker's yeast).